We begin with the raw amino-acid sequence, 619 residues long: Auxin efflux carrier component 7 (619 aa).

The Extracellular segment spans residues 1 to 7; the sequence is MITWHDL. The helical transmembrane segment at 8–28 threads the bilayer; it reads YTVLTAVIPLYVAMILAYGSV. Residues 29–38 are Cytoplasmic-facing; the sequence is RWWKIFSPDQ. Residues 39–59 traverse the membrane as a helical segment; it reads CSGINRFVAIFAVPLLSFHFI. Val51 is a binding site for (indol-3-yl)acetate. Over 60–71 the chain is Extracellular; that stretch reads SSNNPYAMNLRF. A helical transmembrane segment spans residues 72–92; that stretch reads IAADTLQKLIMLTLLIIWANF. The Cytoplasmic portion of the chain corresponds to 93–101; that stretch reads TRSGSLEWS. Residues 102–122 form a helical membrane-spanning segment; that stretch reads ITIFSLSTLPNTLVMGIPLLI. Asn112 and Leu114 together coordinate (indol-3-yl)acetate. The Extracellular portion of the chain corresponds to 123–131; it reads AMYGEYSGS. The helical transmembrane segment at 132-152 threads the bilayer; the sequence is LMVQIVVLQCIIWYTLLLFLF. Tyr145 is a (indol-3-yl)acetate binding site. Topologically, residues 153–479 are cytoplasmic; sequence EYRGAKILIM…LIRNPNTYSS (327 aa). 3 positions are modified to phosphoserine: Ser229, Ser246, and Ser286. The disordered stretch occupies residues 306 to 340; that stretch reads GAPGSYPAPNPEFSTGNKTGSKAPKENHHHVGKSN. Residue Thr320 is modified to Phosphothreonine. Position 357 is a phosphoserine (Ser357). Residues 393-413 are disordered; the sequence is HTQNGENKAGPMNGDYGGEEE. Residues 480-500 form a helical membrane-spanning segment; sequence LIGLIWALVAFRWDVAMPKII. At 501 to 503 the chain is on the extracellular side; sequence QQS. A helical membrane pass occupies residues 504 to 524; it reads ISILSDAGLGMAMFSLGLFMA. Topologically, residues 525–538 are cytoplasmic; sequence LQPKLIACGNSTAT. The chain crosses the membrane as a helical span at residues 539-559; it reads FAMAVRFFTGPAVMAVAAMAI. The Extracellular portion of the chain corresponds to 560 to 564; sequence GLRGD. The chain crosses the membrane as a helical span at residues 565–585; that stretch reads LLRVAIVQAALPQGIVPFVFA. Residues Ile579 and Val580 each contribute to the (indol-3-yl)acetate site. The Cytoplasmic segment spans residues 586–598; the sequence is KEYNVHPAILSTG. A helical membrane pass occupies residues 599-619; that stretch reads VIFGMLIALPITLVYYILLGL.

This sequence belongs to the auxin efflux carrier (TC 2.A.69.1) family. As to quaternary structure, homodimer.

It is found in the cell membrane. Its function is as follows. Acts as a component of the auxin efflux carrier. Mediates the initial auxin gradient which contributes to the establishment of the apical-basal axis in early embryogenesis. Together with PIN3 and PIN4, involved in the connective auxin transport (CAT) that ensures communication across the shoot system, and modulates strigolactone-mediated shoot branching control. The abcb19 pin3 pin4 pin7 quadruple mutant exhibits an additive phenotype on strigolactone-mediated bud outgrowth responses and shoot branching control. This is Auxin efflux carrier component 7 from Arabidopsis thaliana (Mouse-ear cress).